A 270-amino-acid polypeptide reads, in one-letter code: S-adenosylmethionine decarboxylase proenzyme (270 aa).

The active-site Schiff-base intermediate with substrate; via pyruvic acid is the S120. Pyruvic acid (Ser); by autocatalysis is present on S120. Residue H125 is the Proton acceptor; for processing activity of the active site. The active-site Proton donor; for catalytic activity is C148.

This sequence belongs to the prokaryotic AdoMetDC family. Type 2 subfamily. Heterooctamer of four alpha and four beta chains arranged as a tetramer of alpha/beta heterodimers. It depends on pyruvate as a cofactor. Is synthesized initially as an inactive proenzyme. Formation of the active enzyme involves a self-maturation process in which the active site pyruvoyl group is generated from an internal serine residue via an autocatalytic post-translational modification. Two non-identical subunits are generated from the proenzyme in this reaction, and the pyruvate is formed at the N-terminus of the alpha chain, which is derived from the carboxyl end of the proenzyme. The post-translation cleavage follows an unusual pathway, termed non-hydrolytic serinolysis, in which the side chain hydroxyl group of the serine supplies its oxygen atom to form the C-terminus of the beta chain, while the remainder of the serine residue undergoes an oxidative deamination to produce ammonia and the pyruvoyl group blocking the N-terminus of the alpha chain.

It catalyses the reaction S-adenosyl-L-methionine + H(+) = S-adenosyl 3-(methylsulfanyl)propylamine + CO2. It participates in amine and polyamine biosynthesis; S-adenosylmethioninamine biosynthesis; S-adenosylmethioninamine from S-adenosyl-L-methionine: step 1/1. Catalyzes the decarboxylation of S-adenosylmethionine to S-adenosylmethioninamine (dcAdoMet), the propylamine donor required for the synthesis of the polyamines spermine and spermidine from the diamine putrescine. This is S-adenosylmethionine decarboxylase proenzyme from Alkaliphilus oremlandii (strain OhILAs) (Clostridium oremlandii (strain OhILAs)).